A 257-amino-acid chain; its full sequence is Glucosamine-6-phosphate deaminase (257 aa).

Asp-64 acts as the Proton acceptor; for enolization step in catalysis. Residue Asn-133 is the For ring-opening step of the active site. His-135 (proton acceptor; for ring-opening step) is an active-site residue. Residue Glu-140 is the For ring-opening step of the active site.

It belongs to the glucosamine/galactosamine-6-phosphate isomerase family. NagB subfamily.

It catalyses the reaction alpha-D-glucosamine 6-phosphate + H2O = beta-D-fructose 6-phosphate + NH4(+). Its pathway is amino-sugar metabolism; N-acetylneuraminate degradation; D-fructose 6-phosphate from N-acetylneuraminate: step 5/5. In terms of biological role, catalyzes the reversible isomerization-deamination of glucosamine 6-phosphate (GlcN6P) to form fructose 6-phosphate (Fru6P) and ammonium ion. The sequence is that of Glucosamine-6-phosphate deaminase from Corynebacterium urealyticum (strain ATCC 43042 / DSM 7109).